A 314-amino-acid chain; its full sequence is Nerylneryl diphosphate synthase CPT2, chloroplastic (314 aa).

A chloroplast-targeting transit peptide spans 1–61 (MNSSIVSQHF…MSDRGLSKIS (61 aa)). Residue aspartate 97 is part of the active site.

Belongs to the UPP synthase family. Mg(2+) is required as a cofactor. Expressed in stems. Expressed in petiolules. Expressed at low levels in leaf trichomes, old leaf and roots.

It is found in the plastid. The protein localises to the chloroplast. The catalysed reaction is 3 isopentenyl diphosphate + dimethylallyl diphosphate = nerylneryl diphosphate + 3 diphosphate. It catalyses the reaction isopentenyl diphosphate + dimethylallyl diphosphate = neryl diphosphate + diphosphate. The enzyme catalyses neryl diphosphate + isopentenyl diphosphate = (2Z,6Z)-farnesyl diphosphate + diphosphate. It carries out the reaction (2Z,6Z)-farnesyl diphosphate + isopentenyl diphosphate = nerylneryl diphosphate + diphosphate. Uses dimethylallyl diphosphate and isopentenyl diphosphate to catalyze the cis-prenyl chain elongation and produce the 20 carbon product nerylneryl diphosphate. This chain is Nerylneryl diphosphate synthase CPT2, chloroplastic, found in Solanum lycopersicum (Tomato).